A 251-amino-acid chain; its full sequence is Auxin-responsive protein IAA29 (251 aa).

Positions leucine 3–leucine 7 match the EAR-like (transcriptional repression) motif. A PB1 domain is found at serine 159–tyrosine 246.

This sequence belongs to the Aux/IAA family. As to quaternary structure, homodimers and heterodimers.

Its subcellular location is the nucleus. Functionally, aux/IAA proteins are short-lived transcriptional factors that function as repressors of early auxin response genes at low auxin concentrations. Repression is thought to result from the interaction with auxin response factors (ARFs), proteins that bind to the auxin-responsive promoter element (AuxRE). Formation of heterodimers with ARF proteins may alter their ability to modulate early auxin response genes expression. The chain is Auxin-responsive protein IAA29 (IAA29) from Arabidopsis thaliana (Mouse-ear cress).